A 134-amino-acid chain; its full sequence is Cytochrome b (134 aa).

The next 3 membrane-spanning stretches (helical) occupy residues 33–53 (FGSLLGVCLAVQILTGLFLAM), 77–98 (WLLRYLHANGASMFFICLYLHV), and 113–133 (WNIGILLLFAVMATAFMGYVL). Positions 83 and 97 each coordinate heme b.

It belongs to the cytochrome b family. The cytochrome bc1 complex contains 11 subunits: 3 respiratory subunits (MT-CYB, CYC1 and UQCRFS1), 2 core proteins (UQCRC1 and UQCRC2) and 6 low-molecular weight proteins (UQCRH/QCR6, UQCRB/QCR7, UQCRQ/QCR8, UQCR10/QCR9, UQCR11/QCR10 and a cleavage product of UQCRFS1). This cytochrome bc1 complex then forms a dimer. Heme b serves as cofactor.

The protein localises to the mitochondrion inner membrane. Its function is as follows. Component of the ubiquinol-cytochrome c reductase complex (complex III or cytochrome b-c1 complex) that is part of the mitochondrial respiratory chain. The b-c1 complex mediates electron transfer from ubiquinol to cytochrome c. Contributes to the generation of a proton gradient across the mitochondrial membrane that is then used for ATP synthesis. This Chiroderma salvini (Salvin's big-eyed bat) protein is Cytochrome b (MT-CYB).